The sequence spans 505 residues: Exoglucanase 1 (505 aa).

Positions 1–17 (MYRKLAVISAFLAAARA) are cleaved as a signal peptide. Glutamine 18 carries the post-translational modification Pyrrolidone carboxylic acid. Residues 18–449 (QQVCTQQAET…GSTGGNTGSN (432 aa)) form a catalytic region. Disulfide bonds link cysteine 21–cysteine 88, cysteine 36–cysteine 41, cysteine 66–cysteine 87, and cysteine 77–cysteine 83. 2 N-linked (GlcNAc...) asparagine glycosylation sites follow: asparagine 93 and asparagine 126. Disulfide bonds link cysteine 151–cysteine 410, cysteine 185–cysteine 223, cysteine 189–cysteine 222, cysteine 243–cysteine 269, cysteine 251–cysteine 256, and cysteine 274–cysteine 344. Glutamate 225 functions as the Nucleophile in the catalytic mechanism. The active-site Proton donor/acceptor is the glutamate 230. Asparagine 283 and asparagine 397 each carry an N-linked (GlcNAc...) asparagine glycan. Disordered regions lie at residues 399 to 423 (TAST…VEAQ) and 440 to 472 (GSTG…ATQT). Residues 409 to 423 (SCSTSSGVPAQVEAQ) are compositionally biased toward polar residues. Residues 447 to 470 (GSNPPGTSTTRAPPSSTGSSPTAT) are compositionally biased toward low complexity. The linker stretch occupies residues 450-468 (PPGTSTTRAPPSSTGSSPT). Residues 469–505 (ATQTHYGQCGGTGWTGPTRCASGYTCQVLNPFYSQCL) form the CBM1 domain.

This sequence belongs to the glycosyl hydrolase 7 (cellulase C) family. In terms of processing, O-glycosylated. O-glycosylation of the cellulase linker provides protection from proteolysis. Linker glycans also contribute to binding affinity of cellobiohydrolases to cellulose.

It is found in the secreted. It carries out the reaction Hydrolysis of (1-&gt;4)-beta-D-glucosidic linkages in cellulose and cellotetraose, releasing cellobiose from the non-reducing ends of the chains.. Functionally, exocellobiohydrolases (CBH) that catalyzes the hydrolysis of 1,4-beta-D-glucosidic bonds in cellulose to release the disaccharide cellobiose. The degradation of cellulose involves an interplay between different cellulolytic enzymes. Hydrolysis starts with endoglucanases (EGs), which cut internal beta-1,4-glucosidic bonds in cellulose to reduce the polymerization degree of the substrate and create new chain ends for exocellobiohydrolases (CBHs). The CBHs release the disaccharide cellobiose from the non-reducing end of the cellulose polymer chain. Finally, beta-1,4-glucosidases hydrolyze the cellobiose and other short cello-oligosaccharides into glucose units. This Trichoderma harzianum (Hypocrea lixii) protein is Exoglucanase 1 (cbh1).